Here is a 337-residue protein sequence, read N- to C-terminus: Endochitinase 37 (337 aa).

The first 25 residues, 1–25, serve as a signal peptide directing secretion; sequence MTRLLDASFLLLPVIASTLFGTASA. Positions 38–337 constitute a GH18 domain; sequence KVLQGYWENW…GSKNWTFGDN (300 aa). The active-site Proton donor is the Glu-160. An N-linked (GlcNAc...) asparagine glycan is attached at Asn-331.

It belongs to the glycosyl hydrolase 18 family. Chitinase class V subfamily. Monomer.

It is found in the secreted. The catalysed reaction is Random endo-hydrolysis of N-acetyl-beta-D-glucosaminide (1-&gt;4)-beta-linkages in chitin and chitodextrins.. In terms of biological role, secreted chitinase involved in the degradation of chitin, a component of the cell walls of fungi and exoskeletal elements of some animals (including worms and arthropods). Plays a morphogenetic role during apical growth, cell division and differentiation (cell wall morphogenesis). May be involved in the degradation and further assimilation of phytopathogenic fungi, namely mycoparasitism, the major mechanism accounting for the antagonistic activity against phytopathogenic fungi displayed by Trichoderma. The chain is Endochitinase 37 (chit37) from Trichoderma harzianum (Hypocrea lixii).